Consider the following 202-residue polypeptide: Superoxide dismutase [Mn], mitochondrial (202 aa).

The N-terminal 5 residues, histidine 1–methionine 5, are a transit peptide targeting the mitochondrion. Histidine 31 is a Mn(2+) binding site. A 3'-nitrotyrosine modification is found at tyrosine 39. An N6-acetyllysine; alternate modification is found at lysine 49. Lysine 49 is modified (N6-succinyllysine; alternate). A Mn(2+)-binding site is contributed by histidine 79. Lysine 95 is subject to N6-acetyllysine. 2 positions are modified to N6-acetyllysine; alternate: lysine 103 and lysine 111. N6-succinyllysine; alternate is present on residues lysine 103 and lysine 111. 2 residues coordinate Mn(2+): aspartate 164 and histidine 168. At lysine 183 the chain carries N6-acetyllysine.

The protein belongs to the iron/manganese superoxide dismutase family. As to quaternary structure, homotetramer. Mn(2+) serves as cofactor. Nitrated under oxidative stress. Nitration coupled with oxidation inhibits the catalytic activity. Post-translationally, acetylation at Lys-122 decreases enzymatic activity. Deacetylated by SIRT3 upon exposure to ionizing radiations or after long fasting. In terms of processing, polyubiquitinated; leading to proteasomal degradation. Deubiquitinated by USP36 which increases protein stability.

It is found in the mitochondrion matrix. The catalysed reaction is 2 superoxide + 2 H(+) = H2O2 + O2. Functionally, destroys superoxide anion radicals which are normally produced within the cells and which are toxic to biological systems. The sequence is that of Superoxide dismutase [Mn], mitochondrial (SOD2) from Oryctolagus cuniculus (Rabbit).